Here is a 321-residue protein sequence, read N- to C-terminus: Aspartate carbamoyltransferase catalytic subunit (321 aa).

Carbamoyl phosphate is bound by residues arginine 64 and threonine 65. Lysine 92 contacts L-aspartate. Arginine 114, histidine 142, and glutamine 145 together coordinate carbamoyl phosphate. L-aspartate is bound by residues arginine 175 and arginine 229. Carbamoyl phosphate contacts are provided by glycine 270 and proline 271.

The protein belongs to the aspartate/ornithine carbamoyltransferase superfamily. ATCase family. Heterododecamer (2C3:3R2) of six catalytic PyrB chains organized as two trimers (C3), and six regulatory PyrI chains organized as three dimers (R2).

The catalysed reaction is carbamoyl phosphate + L-aspartate = N-carbamoyl-L-aspartate + phosphate + H(+). It functions in the pathway pyrimidine metabolism; UMP biosynthesis via de novo pathway; (S)-dihydroorotate from bicarbonate: step 2/3. In terms of biological role, catalyzes the condensation of carbamoyl phosphate and aspartate to form carbamoyl aspartate and inorganic phosphate, the committed step in the de novo pyrimidine nucleotide biosynthesis pathway. In Azorhizobium caulinodans (strain ATCC 43989 / DSM 5975 / JCM 20966 / LMG 6465 / NBRC 14845 / NCIMB 13405 / ORS 571), this protein is Aspartate carbamoyltransferase catalytic subunit.